Reading from the N-terminus, the 491-residue chain is Pentatricopeptide repeat-containing protein At5g27460 (491 aa).

PPR repeat units lie at residues 69–99 (SLSE…MENQ), 105–139 (SVYD…SVSM), 142–176 (AKSA…GFLV), 177–211 (TPHP…KIPR), 212–246 (NVLS…KSVE), 248–278 (GWSS…AEKM), 283–313 (NRLG…SKSV), 318–348 (SCVN…WEAQ), 353–387 (DVRV…GGTP), and 388–426 (NYKT…HWRP).

This sequence belongs to the PPR family. P subfamily.

The chain is Pentatricopeptide repeat-containing protein At5g27460 from Arabidopsis thaliana (Mouse-ear cress).